We begin with the raw amino-acid sequence, 181 residues long: Protein FAM237A (181 aa).

An N-terminal signal peptide occupies residues 1 to 33 (MADPGNRGGIHRPLSFTCSLLIVGMCCVSPFFC). At Leu113 the chain carries Leucine amide. Positions 114–181 (GRRQLVGEEE…GKVNLEIKRK (68 aa)) are cleaved as a propeptide — removed in the mature form.

The active form requires C-terminal amidation and disulfide bond formation. As to expression, expressed in the pituitary, testis, and heart and at lower levels in the brain.

It is found in the secreted. Its function is as follows. May be capable of activating GPR83 via the GNAQ signaling pathway. This chain is Protein FAM237A, found in Homo sapiens (Human).